The chain runs to 358 residues: Porphobilinogen deaminase, chloroplastic (358 aa).

The first 24 residues, 1-24 (MPPPPRCAATTAHHSLLGSPTCLA), serve as a signal peptide directing secretion. At cysteine 290 the chain carries S-(dipyrrolylmethanemethyl)cysteine.

Belongs to the HMBS family. Dipyrromethane serves as cofactor.

It is found in the plastid. Its subcellular location is the chloroplast. The enzyme catalyses 4 porphobilinogen + H2O = hydroxymethylbilane + 4 NH4(+). It functions in the pathway porphyrin-containing compound metabolism; protoporphyrin-IX biosynthesis; coproporphyrinogen-III from 5-aminolevulinate: step 2/4. The protein operates within porphyrin-containing compound metabolism; chlorophyll biosynthesis. In terms of biological role, tetrapolymerization of the monopyrrole PBG into the hydroxymethylbilane pre-uroporphyrinogen in several discrete steps. The chain is Porphobilinogen deaminase, chloroplastic (HEMC) from Oryza sativa subsp. japonica (Rice).